The following is a 206-amino-acid chain: dTTP/UTP pyrophosphatase (206 aa).

Residue Asp-79 is the Proton acceptor of the active site.

Belongs to the Maf family. YhdE subfamily. The cofactor is a divalent metal cation.

It is found in the cytoplasm. It catalyses the reaction dTTP + H2O = dTMP + diphosphate + H(+). The enzyme catalyses UTP + H2O = UMP + diphosphate + H(+). Its function is as follows. Nucleoside triphosphate pyrophosphatase that hydrolyzes dTTP and UTP. May have a dual role in cell division arrest and in preventing the incorporation of modified nucleotides into cellular nucleic acids. In Rhizobium johnstonii (strain DSM 114642 / LMG 32736 / 3841) (Rhizobium leguminosarum bv. viciae), this protein is dTTP/UTP pyrophosphatase.